Reading from the N-terminus, the 274-residue chain is uncharacterized protein (274 aa).

The span at 1 to 20 shows a compositional bias: basic and acidic residues; it reads MSLEKSLDEIINERTNGFDH. Disordered stretches follow at residues 1–63, 148–217, and 230–274; these read MSLE…HDLD, NLKG…EDLD, and ASTV…MEAV. Over residues 21–44 the composition is skewed to basic residues; it reads KHSRRRGSQNRISKKSRLTYKFKR. Residues 45–63 show a composition bias toward basic and acidic residues; it reads ASKEHNSSPDDGPWQHDLD. Residues 85–161 form the RRM domain; that stretch reads FGVRVENLHY…SEIQISKKSP (77 aa). A compositionally biased stretch (polar residues) spans 148-160; the sequence is NLKGSEIQISKKS. 2 stretches are compositionally biased toward low complexity: residues 181-190 and 200-211; these read SSRSNRGFNR and RSSSKKSSNNSI. A compositionally biased stretch (polar residues) spans 230–245; the sequence is ASTVSSHSSQDFTPSI. Residues 263–274 are compositionally biased toward acidic residues; that stretch reads LTEEMDLQMEAV.

This is an uncharacterized protein from Schizosaccharomyces pombe (strain 972 / ATCC 24843) (Fission yeast).